The following is a 346-amino-acid chain: Sensor histidine kinase GraS (346 aa).

Helical transmembrane passes span 15–35 (MNWI…SLID) and 43–63 (LFYI…LTYF). Residues 126–332 (EFVHDIKTPV…TVRLIFPLQN (207 aa)) enclose the Histidine kinase domain.

In terms of assembly, interacts with GraX.

The protein localises to the cell membrane. The catalysed reaction is ATP + protein L-histidine = ADP + protein N-phospho-L-histidine.. Its function is as follows. Member of the two-component regulatory system GraR/GraS involved in resistance against cationic antimicrobial peptides (CAMPs). Functions as a sensor protein kinase which phosphorylates GraR through the auxiliary protein GraX. In turn, GraR up-regulates many genes such as adhesins, exoproteins, transporters, toxins, and proteins involved in cell wall synthesis. Down-regulates the expression of many genes involved in RNA and amino acid synthesis or glycolysis. The chain is Sensor histidine kinase GraS (graS) from Staphylococcus aureus (strain COL).